We begin with the raw amino-acid sequence, 458 residues long: Elongation factor 1-alpha (458 aa).

N,N,N-trimethylglycine is present on glycine 2. Lysine 3 is subject to N6,N6-dimethyllysine; alternate. Lysine 3 carries the post-translational modification N6-methyllysine; alternate. The region spanning 5 to 240 is the tr-type G domain; sequence KTHVNVVVIG…DAIEPPVRPS (236 aa). The segment at 14–21 is G1; it reads GHVDSGKS. 14 to 21 lines the GTP pocket; the sequence is GHVDSGKS. Lysine 30 is subject to N6-methyllysine. The interval 70–74 is G2; it reads GITID. N6,N6,N6-trimethyllysine is present on lysine 79. Positions 91–94 are G3; it reads DAPG. GTP contacts are provided by residues 91–95 and 153–156; these read DAPGH and NKMD. The G4 stretch occupies residues 153 to 156; sequence NKMD. The tract at residues 192–194 is G5; that stretch reads SGW. Lysine 316 is subject to N6,N6-dimethyllysine; alternate. Lysine 316 carries the post-translational modification N6-methyllysine; alternate. Lysine 390 is modified (N6-methyllysine).

Belongs to the TRAFAC class translation factor GTPase superfamily. Classic translation factor GTPase family. EF-Tu/EF-1A subfamily.

The protein localises to the cytoplasm. This protein promotes the GTP-dependent binding of aminoacyl-tRNA to the A-site of ribosomes during protein biosynthesis. The polypeptide is Elongation factor 1-alpha (TEF-1) (Mucor circinelloides f. lusitanicus (Mucor racemosus var. lusitanicus)).